We begin with the raw amino-acid sequence, 197 residues long: Gastrula zinc finger protein XlCGF17.1 (197 aa).

7 C2H2-type zinc fingers span residues 6-28, 34-56, 62-84, 90-112, 118-140, 146-169, and 175-197; these read ISCS…QMTH, YSCS…QKIH, FSCS…HRTH, FFCS…RRTH, FSCS…YRTH, FSCS…RRSH, and FSCS…LRTH.

Belongs to the krueppel C2H2-type zinc-finger protein family.

It is found in the nucleus. May be involved in transcriptional regulation. The polypeptide is Gastrula zinc finger protein XlCGF17.1 (Xenopus laevis (African clawed frog)).